The sequence spans 346 residues: Glycerol-3-phosphate dehydrogenase [NAD(P)+] (346 aa).

Positions 15, 16, 36, and 110 each coordinate NADPH. Positions 110, 139, and 141 each coordinate sn-glycerol 3-phosphate. A143 lines the NADPH pocket. Sn-glycerol 3-phosphate contacts are provided by K194, D247, S257, R258, and N259. K194 (proton acceptor) is an active-site residue. R258 contributes to the NADPH binding site. Residues V282 and E284 each contribute to the NADPH site.

This sequence belongs to the NAD-dependent glycerol-3-phosphate dehydrogenase family.

The protein localises to the cytoplasm. The catalysed reaction is sn-glycerol 3-phosphate + NAD(+) = dihydroxyacetone phosphate + NADH + H(+). The enzyme catalyses sn-glycerol 3-phosphate + NADP(+) = dihydroxyacetone phosphate + NADPH + H(+). Its pathway is membrane lipid metabolism; glycerophospholipid metabolism. Its function is as follows. Catalyzes the reduction of the glycolytic intermediate dihydroxyacetone phosphate (DHAP) to sn-glycerol 3-phosphate (G3P), the key precursor for phospholipid synthesis. This chain is Glycerol-3-phosphate dehydrogenase [NAD(P)+], found in Xylella fastidiosa (strain M23).